The following is a 21-amino-acid chain: Preblooming protein 2 (21 aa).

Possible mediator for cell division in the blooming process. The chain is Preblooming protein 2 from Prorocentrum triestinum (Red tide alga).